The chain runs to 476 residues: Adenosylhomocysteinase (476 aa).

Substrate contacts are provided by Thr67, Asp142, and Glu202. 203–205 (TTT) serves as a coordination point for NAD(+). Lys232 and Asp236 together coordinate substrate. NAD(+)-binding positions include Asn237, 266-271 (GYGDVG), Glu289, Asn324, 345-347 (IGH), and Asn390.

The protein belongs to the adenosylhomocysteinase family. It depends on NAD(+) as a cofactor.

It localises to the cytoplasm. The enzyme catalyses S-adenosyl-L-homocysteine + H2O = L-homocysteine + adenosine. Its pathway is amino-acid biosynthesis; L-homocysteine biosynthesis; L-homocysteine from S-adenosyl-L-homocysteine: step 1/1. May play a key role in the regulation of the intracellular concentration of adenosylhomocysteine. This chain is Adenosylhomocysteinase, found in Prochlorococcus marinus (strain MIT 9303).